We begin with the raw amino-acid sequence, 77 residues long: Acyl carrier protein (77 aa).

A Carrier domain is found at 2-77 (ADTLERVTKI…DAVNYIQNQQ (76 aa)). Serine 37 carries the O-(pantetheine 4'-phosphoryl)serine modification.

It belongs to the acyl carrier protein (ACP) family. 4'-phosphopantetheine is transferred from CoA to a specific serine of apo-ACP by AcpS. This modification is essential for activity because fatty acids are bound in thioester linkage to the sulfhydryl of the prosthetic group.

The protein resides in the cytoplasm. It participates in lipid metabolism; fatty acid biosynthesis. Carrier of the growing fatty acid chain in fatty acid biosynthesis. The sequence is that of Acyl carrier protein (acpA) from Bacillus subtilis (strain 168).